Reading from the N-terminus, the 678-residue chain is Glycine--tRNA ligase beta subunit (678 aa).

This sequence belongs to the class-II aminoacyl-tRNA synthetase family. In terms of assembly, tetramer of two alpha and two beta subunits.

The protein resides in the cytoplasm. The enzyme catalyses tRNA(Gly) + glycine + ATP = glycyl-tRNA(Gly) + AMP + diphosphate. The sequence is that of Glycine--tRNA ligase beta subunit from Streptococcus thermophilus (strain ATCC BAA-491 / LMD-9).